The chain runs to 257 residues: Zinc import ATP-binding protein ZnuC (257 aa).

The 216-residue stretch at Ile5–His220 folds into the ABC transporter domain. Gly37 to Ser44 is an ATP binding site.

The protein belongs to the ABC transporter superfamily. Zinc importer (TC 3.A.1.15.5) family. The complex is composed of two ATP-binding proteins (ZnuC), two transmembrane proteins (ZnuB) and a solute-binding protein (ZnuA).

Its subcellular location is the cell inner membrane. It carries out the reaction Zn(2+)(out) + ATP(in) + H2O(in) = Zn(2+)(in) + ADP(in) + phosphate(in) + H(+)(in). Functionally, part of the ABC transporter complex ZnuABC involved in zinc import. Responsible for energy coupling to the transport system. This chain is Zinc import ATP-binding protein ZnuC, found in Photorhabdus laumondii subsp. laumondii (strain DSM 15139 / CIP 105565 / TT01) (Photorhabdus luminescens subsp. laumondii).